Consider the following 744-residue polypeptide: MGVEPFAHDPAPSELIHSVPACGSPERRVMRPMVREGWLADRQHSDRRGRGRERFLPVSWDAALDLVAGEIRRVSADHGNAAIFAGSYGWTSCGRFHHASTLLKRMLNLVGGFTGHVDTYSIAAGPVILRHTLGDDRACGGQANTLDSIAEHSQTLVVFGAMSPRTAQSEAGGIGAHHLETYLRRIVERGVRVILVSPLKDDLPDWVAAEWWPIRPNTDTALMLGLAGEIVRSGRQDSDFLARCTSGSELYLAYLRGEGDGRPKDAEWASTITGLPAEAIRALAGDLPRTRSMLTVSWSLQRAHHGEQPFWAALGLAAVIGQIGRPGGGVGYGYGSLGGVGAPFTIGKSPAMSQLSKPINSFIPVARISDMLLNPGGPYSYEGEDRRYPDIRLVYWSGGNPFHHHQDLNRLSEAWTRPETIIVQDPMFTATAKRADIVLPASTSIERNDLAGNKRSDFILAMGQAIAPLGEARSDFDIFNALSGKLGVAAAFNEGRDEMGWIRHLYEESRNHAQRHHHFEMPDFETFWAQGHAPCPVQRDHTYLAAFREDPGAHPLDTESGLIVLGSATLARLGYADCGPHPAWIEPAEWLGKAQAGELHLISHQPKGRLHSQLETAEASLAGKREGRDEVMLHPDDASVRGIADGQTVRLWNARGACLATAQVTDSVAAGVAILPTGAWFTPAEAEGPELSGNPNVLTLDIGSSAFGQGCSAHTCLVRIEAHAGDAGDAVRIYDAHLAAILPT.

Mo-bis(molybdopterin guanine dinucleotide) is bound at residue Ser121.

The protein belongs to the prokaryotic molybdopterin-containing oxidoreductase family. The cofactor is Mo-bis(molybdopterin guanine dinucleotide).

This enzyme may serve as a scavenger, allowing the cell to utilize biotin sulfoxide as a biotin source. It reduces a spontaneous oxidation product of biotin, D-biotin D-sulfoxide (BSO or BDS), back to biotin. The protein is Biotin sulfoxide reductase of Cereibacter sphaeroides (Rhodobacter sphaeroides).